The chain runs to 277 residues: NAD kinase (277 aa).

The Proton acceptor role is filled by Asp55. Residues 55 to 56, 131 to 132, Arg157, Asp159, and 170 to 175 contribute to the NAD(+) site; these read DG, NE, and TAYNKS.

The protein belongs to the NAD kinase family. It depends on a divalent metal cation as a cofactor.

Its subcellular location is the cytoplasm. The catalysed reaction is NAD(+) + ATP = ADP + NADP(+) + H(+). In terms of biological role, involved in the regulation of the intracellular balance of NAD and NADP, and is a key enzyme in the biosynthesis of NADP. Catalyzes specifically the phosphorylation on 2'-hydroxyl of the adenosine moiety of NAD to yield NADP. In Streptococcus mutans serotype c (strain ATCC 700610 / UA159), this protein is NAD kinase.